The sequence spans 378 residues: Cysteine synthase (378 aa).

The tract at residues Asn-10 to Glu-31 is disordered. The span at Ser-15–Asn-28 shows a compositional bias: low complexity. Position 79 is an N6-(pyridoxal phosphate)lysine (Lys-79). Residues Gly-215–Thr-219 and Ser-319 each bind pyridoxal 5'-phosphate.

It belongs to the cysteine synthase/cystathionine beta-synthase family. It depends on pyridoxal 5'-phosphate as a cofactor.

It catalyses the reaction O-acetyl-L-serine + hydrogen sulfide = L-cysteine + acetate. The protein operates within amino-acid biosynthesis; L-cysteine biosynthesis; L-cysteine from L-serine: step 2/2. This is Cysteine synthase (cysK) from Dictyostelium discoideum (Social amoeba).